Consider the following 185-residue polypeptide: ATP synthase subunit b (185 aa).

Residues 26 to 46 (LVLIGFAILLFIVIKFVVPMF) traverse the membrane as a helical segment.

Belongs to the ATPase B chain family. As to quaternary structure, F-type ATPases have 2 components, F(1) - the catalytic core - and F(0) - the membrane proton channel. F(1) has five subunits: alpha(3), beta(3), gamma(1), delta(1), epsilon(1). F(0) has three main subunits: a(1), b(2) and c(10-14). The alpha and beta chains form an alternating ring which encloses part of the gamma chain. F(1) is attached to F(0) by a central stalk formed by the gamma and epsilon chains, while a peripheral stalk is formed by the delta and b chains.

The protein resides in the cell membrane. F(1)F(0) ATP synthase produces ATP from ADP in the presence of a proton or sodium gradient. F-type ATPases consist of two structural domains, F(1) containing the extramembraneous catalytic core and F(0) containing the membrane proton channel, linked together by a central stalk and a peripheral stalk. During catalysis, ATP synthesis in the catalytic domain of F(1) is coupled via a rotary mechanism of the central stalk subunits to proton translocation. Functionally, component of the F(0) channel, it forms part of the peripheral stalk, linking F(1) to F(0). This chain is ATP synthase subunit b, found in Renibacterium salmoninarum (strain ATCC 33209 / DSM 20767 / JCM 11484 / NBRC 15589 / NCIMB 2235).